The following is a 157-amino-acid chain: Protein GrpE (157 aa).

Over residues 1-10 (MQEENQHPEQ) the composition is skewed to basic and acidic residues. The tract at residues 1–21 (MQEENQHPEQDDISEAQDAGA) is disordered.

The protein belongs to the GrpE family. In terms of assembly, homodimer.

It localises to the cytoplasm. Functionally, participates actively in the response to hyperosmotic and heat shock by preventing the aggregation of stress-denatured proteins, in association with DnaK and GrpE. It is the nucleotide exchange factor for DnaK and may function as a thermosensor. Unfolded proteins bind initially to DnaJ; upon interaction with the DnaJ-bound protein, DnaK hydrolyzes its bound ATP, resulting in the formation of a stable complex. GrpE releases ADP from DnaK; ATP binding to DnaK triggers the release of the substrate protein, thus completing the reaction cycle. Several rounds of ATP-dependent interactions between DnaJ, DnaK and GrpE are required for fully efficient folding. This is Protein GrpE from Methylovorus sp. (strain SS1 / DSM 11726).